The sequence spans 189 residues: MTVGLLGGSFDPPHEGHVQISRAALKRFDLDQLWWLVTPGNPLKENPPASMTRRIKAAREIMDHPRVRISDIEARLNTRYTAQTLRELRKLYPQVRFVWLMGADNLAHFHRWKNWRGIMESVPVGVLARPGDRISARLSRAARIYSQHRIPAGQSHLLARASSPAWCFLNVPMTKASSTEIRKRGAWTG.

It belongs to the NadD family.

It catalyses the reaction nicotinate beta-D-ribonucleotide + ATP + H(+) = deamido-NAD(+) + diphosphate. It participates in cofactor biosynthesis; NAD(+) biosynthesis; deamido-NAD(+) from nicotinate D-ribonucleotide: step 1/1. Functionally, catalyzes the reversible adenylation of nicotinate mononucleotide (NaMN) to nicotinic acid adenine dinucleotide (NaAD). This Ruegeria sp. (strain TM1040) (Silicibacter sp.) protein is Probable nicotinate-nucleotide adenylyltransferase.